A 432-amino-acid chain; its full sequence is uncharacterized protein (432 aa).

Transmembrane regions (helical) follow at residues 7 to 27 (FIGL…PDIY), 29 to 49 (GIVI…PLPV), 68 to 88 (EALT…FMLA), 124 to 144 (FLSM…IALG), 156 to 176 (FLLL…IIGS), 196 to 216 (VGFP…YIYF), 241 to 261 (LVIF…SEIF), 266 to 286 (FDSV…LVEV), 291 to 311 (KIDW…GVIV), 326 to 346 (ILGN…TIIL), 358 to 378 (IIVP…LILA), 379 to 399 (VGMS…NAIV), and 412 to 432 (IGMI…ILYL).

Belongs to the CitM (TC 2.A.11) transporter family.

It is found in the cell membrane. This is an uncharacterized protein from Methanocaldococcus jannaschii (strain ATCC 43067 / DSM 2661 / JAL-1 / JCM 10045 / NBRC 100440) (Methanococcus jannaschii).